Consider the following 276-residue polypeptide: NH(3)-dependent NAD(+) synthetase (276 aa).

43–50 is an ATP binding site; it reads GISGGVDS. Aspartate 49 contacts Mg(2+). Residue arginine 146 participates in deamido-NAD(+) binding. Residue threonine 166 coordinates ATP. Glutamate 171 is a binding site for Mg(2+). Deamido-NAD(+) contacts are provided by lysine 179 and aspartate 186. Lysine 195 and threonine 217 together coordinate ATP. 266 to 267 serves as a coordination point for deamido-NAD(+); it reads HK.

It belongs to the NAD synthetase family. Homodimer.

It catalyses the reaction deamido-NAD(+) + NH4(+) + ATP = AMP + diphosphate + NAD(+) + H(+). It functions in the pathway cofactor biosynthesis; NAD(+) biosynthesis; NAD(+) from deamido-NAD(+) (ammonia route): step 1/1. Its function is as follows. Catalyzes the ATP-dependent amidation of deamido-NAD to form NAD. Uses ammonia as a nitrogen source. In Shewanella woodyi (strain ATCC 51908 / MS32), this protein is NH(3)-dependent NAD(+) synthetase.